A 297-amino-acid polypeptide reads, in one-letter code: Probable endonuclease 4 (297 aa).

Histidine 69, histidine 110, glutamate 145, aspartate 179, histidine 182, histidine 214, aspartate 227, histidine 229, and glutamate 259 together coordinate Zn(2+).

This sequence belongs to the AP endonuclease 2 family. It depends on Zn(2+) as a cofactor.

The enzyme catalyses Endonucleolytic cleavage to 5'-phosphooligonucleotide end-products.. Functionally, endonuclease IV plays a role in DNA repair. It cleaves phosphodiester bonds at apurinic or apyrimidinic (AP) sites, generating a 3'-hydroxyl group and a 5'-terminal sugar phosphate. The polypeptide is Probable endonuclease 4 (Oceanobacillus iheyensis (strain DSM 14371 / CIP 107618 / JCM 11309 / KCTC 3954 / HTE831)).